The following is a 506-amino-acid chain: Probable UTP--glucose-1-phosphate uridylyltransferase (506 aa).

Phosphoserine is present on residues Ser-15 and Ser-17. UTP is bound by residues 115 to 118 (LNGG), Lys-129, Gln-192, and Gly-221. 117–118 (GG) contacts substrate. Residue Lys-129 participates in Mg(2+) binding. Residues His-222 and 250-252 (NID) each bind substrate. 2 residues coordinate UTP: Asp-252 and Lys-394. Residue Asp-252 participates in Mg(2+) binding. The active site involves Lys-394. The tract at residues 455-506 (HLTITGDVNIGRNVTLKGTVIIVASDANRIDIPNGSVLENCVITGNLNILEH) is oligomerization.

The protein belongs to the UDPGP type 1 family. Homooctamer.

The protein localises to the cytoplasm. Its subcellular location is the nucleus. It carries out the reaction alpha-D-glucose 1-phosphate + UTP + H(+) = UDP-alpha-D-glucose + diphosphate. Its function is as follows. Plays a central role as a glucosyl donor in cellular metabolic pathways. This is Probable UTP--glucose-1-phosphate uridylyltransferase (fyu1) from Schizosaccharomyces pombe (strain 972 / ATCC 24843) (Fission yeast).